A 214-amino-acid polypeptide reads, in one-letter code: Cell division protein SepF (214 aa).

Residues 25 to 51 (EDDDRGARAGGYSRRPREDRFEEEAYG) are disordered.

This sequence belongs to the SepF family. In terms of assembly, homodimer. Interacts with FtsZ.

It localises to the cytoplasm. Functionally, cell division protein that is part of the divisome complex and is recruited early to the Z-ring. Probably stimulates Z-ring formation, perhaps through the cross-linking of FtsZ protofilaments. Its function overlaps with FtsA. The protein is Cell division protein SepF of Mycolicibacterium smegmatis (strain ATCC 700084 / mc(2)155) (Mycobacterium smegmatis).